Here is a 466-residue protein sequence, read N- to C-terminus: 3-isopropylmalate dehydratase large subunit 1 (466 aa).

[4Fe-4S] cluster is bound by residues C347, C407, and C410.

Belongs to the aconitase/IPM isomerase family. LeuC type 1 subfamily. Heterodimer of LeuC and LeuD. [4Fe-4S] cluster is required as a cofactor.

The enzyme catalyses (2R,3S)-3-isopropylmalate = (2S)-2-isopropylmalate. The protein operates within amino-acid biosynthesis; L-leucine biosynthesis; L-leucine from 3-methyl-2-oxobutanoate: step 2/4. In terms of biological role, catalyzes the isomerization between 2-isopropylmalate and 3-isopropylmalate, via the formation of 2-isopropylmaleate. This Salmonella choleraesuis (strain SC-B67) protein is 3-isopropylmalate dehydratase large subunit 1.